The following is a 1500-amino-acid chain: Carbamoyl-phosphate synthase [ammonia], mitochondrial (1500 aa).

A mitochondrion-targeting transit peptide spans 1–38 (MTRILTAFKVVRTLKTGFGFTNVTAHQKWKFSRPGIRL). The tract at residues 39–218 (LSVKAQTAHI…VKVYGKGNPT (180 aa)) is anthranilate phosphoribosyltransferase homolog. Lysine 55, lysine 57, and lysine 119 each carry N6-acetyllysine; alternate. Lysine 55 is modified (N6-glutaryllysine; alternate). 3 positions are modified to N6-succinyllysine; alternate: lysine 55, lysine 57, and lysine 119. Position 148 is a phosphoserine (serine 148). An N6-acetyllysine; alternate mark is found at lysine 157 and lysine 171. N6-succinyllysine; alternate is present on lysine 157. Lysine 171 carries the N6-glutaryllysine; alternate modification. Lysine 176 is modified (N6-glutaryllysine). Lysine 182 and lysine 197 each carry N6-acetyllysine. N6-acetyllysine; alternate is present on residues lysine 207, lysine 210, lysine 214, lysine 219, and lysine 228. N6-glutaryllysine; alternate is present on residues lysine 207, lysine 210, lysine 214, lysine 219, and lysine 228. Lysine 207 is subject to N6-succinyllysine; alternate. Lysine 214 is modified (N6-succinyllysine; alternate). The Glutamine amidotransferase type-1 domain maps to 219–404 (KVVAVDCGIK…FSLIKKGKAT (186 aa)). At lysine 237 the chain carries N6-glutaryllysine. Lysine 280, lysine 287, lysine 307, and lysine 310 each carry N6-acetyllysine; alternate. Lysine 280 carries the N6-glutaryllysine; alternate modification. Residues lysine 287 and lysine 307 each carry the N6-succinyllysine; alternate modification. An N6-glutaryllysine; alternate mark is found at lysine 307 and lysine 310. Lysine 400 is subject to N6-succinyllysine. N6-glutaryllysine; alternate occurs at positions 402, 412, 453, and 458. Residues lysine 402 and lysine 412 each carry the N6-succinyllysine; alternate modification. N6-acetyllysine; alternate is present on residues lysine 412, lysine 453, lysine 458, lysine 522, lysine 527, and lysine 532. 3 positions are modified to N6-succinyllysine; alternate: lysine 458, lysine 522, and lysine 527. N6-glutaryllysine; alternate is present on residues lysine 527 and lysine 532. Serine 537 is subject to Phosphoserine; alternate. Serine 537 carries O-linked (GlcNAc) serine; alternate glycosylation. A Phosphoserine modification is found at serine 540. The ATP-grasp 1 domain occupies 551–743 (SDKLNEINEK…LAFIAAKIAL (193 aa)). An N6-acetyllysine; alternate mark is found at lysine 553 and lysine 560. An N6-glutaryllysine; alternate modification is found at lysine 553. Lysine 553 and lysine 560 each carry N6-succinyllysine; alternate. At serine 569 the chain carries Phosphoserine. Residues lysine 575 and lysine 612 each carry the N6-acetyllysine; alternate modification. An N6-succinyllysine; alternate mark is found at lysine 575 and lysine 612. Lysine 630 is modified (N6-acetyllysine). N6-glutaryllysine is present on lysine 728. N6-acetyllysine; alternate is present on residues lysine 751, lysine 757, lysine 772, lysine 793, lysine 811, and lysine 831. N6-succinyllysine; alternate occurs at positions 751 and 757. Residues lysine 757, lysine 772, lysine 793, and lysine 811 each carry the N6-glutaryllysine; alternate modification. Lysine 793 carries the post-translational modification N6-succinyllysine; alternate. The residue at position 831 (lysine 831) is an N6-succinyllysine; alternate. Serine 835 carries the phosphoserine modification. Lysine 841 and lysine 856 each carry N6-acetyllysine; alternate. 2 positions are modified to N6-glutaryllysine; alternate: lysine 841 and lysine 856. The residue at position 869 (lysine 869) is an N6-glutaryllysine. N6-acetyllysine; alternate occurs at positions 875, 889, and 892. N6-glutaryllysine; alternate is present on residues lysine 875, lysine 889, and lysine 892. N6-succinyllysine; alternate occurs at positions 875, 889, and 892. Serine 896 and serine 898 each carry phosphoserine. The residue at position 905 (lysine 905) is an N6-glutaryllysine. Lysine 908, lysine 915, and lysine 919 each carry N6-acetyllysine; alternate. Residues lysine 908, lysine 915, and lysine 919 each carry the N6-glutaryllysine; alternate modification. An N6-succinyllysine; alternate mark is found at lysine 915 and lysine 919. Lysine 935 is subject to N6-acetyllysine. A Phosphoserine modification is found at serine 1036. Residue lysine 1074 is modified to N6-acetyllysine; alternate. Lysine 1074 carries the N6-glutaryllysine; alternate modification. The residue at position 1074 (lysine 1074) is an N6-succinyllysine; alternate. Serine 1079, serine 1090, and serine 1093 each carry phosphoserine. An ATP-grasp 2 domain is found at 1093 to 1284 (SAVLDELKVA…FIDVATKVMI (192 aa)). Lysine 1100 carries the post-translational modification N6-acetyllysine; alternate. Lysine 1100 carries the post-translational modification N6-succinyllysine; alternate. Lysine 1149 bears the N6-succinyllysine mark. An N6-glutaryllysine modification is found at lysine 1150. N6-acetyllysine; alternate is present on residues lysine 1168 and lysine 1183. Residues lysine 1168 and lysine 1183 each carry the N6-glutaryllysine; alternate modification. Residues lysine 1168 and lysine 1183 each carry the N6-succinyllysine; alternate modification. A Phosphoserine modification is found at serine 1203. N6-acetyllysine is present on lysine 1222. At lysine 1224 the chain carries N6-glutaryllysine. An N6-acetyllysine; alternate mark is found at lysine 1232, lysine 1269, and lysine 1291. Residues lysine 1232, lysine 1269, and lysine 1291 each carry the N6-succinyllysine; alternate modification. Residue serine 1331 is glycosylated (O-linked (GlcNAc) serine). Residue threonine 1332 is glycosylated (O-linked (GlcNAc) threonine). The MGS-like domain maps to 1355–1500 (FKIPQKGILI…YRQYSAGKAA (146 aa)). Lysine 1356 carries the post-translational modification N6-acetyllysine; alternate. Lysine 1356 and lysine 1360 each carry N6-glutaryllysine; alternate. An N6-succinyllysine; alternate mark is found at lysine 1356 and lysine 1360. Threonine 1391, threonine 1394, and tryptophan 1410 together coordinate N-acetyl-L-glutamate. Serine 1419 and serine 1431 each carry phosphoserine. Residues asparagine 1437 and asparagine 1440 each coordinate N-acetyl-L-glutamate. Residue lysine 1444 is modified to N6-acetyllysine; alternate. Lysine 1444 is subject to N6-succinyllysine; alternate. Position 1449 (asparagine 1449) interacts with N-acetyl-L-glutamate. Residues lysine 1471, lysine 1479, and lysine 1486 each carry the N6-acetyllysine; alternate modification. N6-succinyllysine; alternate is present on residues lysine 1471, lysine 1479, and lysine 1486. N6-glutaryllysine; alternate occurs at positions 1479 and 1486.

In terms of assembly, can form homooligomers (monomers as predominant form and dimers). Undergoes proteolytic cleavage in the C-terminal region corresponding to the loss of approximately 12 AA residues from the C-terminus. Post-translationally, succinylated at Lys-287 and Lys-1291. Desuccinylated at Lys-1291 by SIRT5, leading to activation. In terms of processing, glutarylated. Glutarylation levels increase during fasting. Deglutarylated by SIRT5 at Lys-55, Lys-219, Lys-412, Lys-889, Lys-892, Lys-915, Lys-1360 and Lys-1486, leading to activation. Primarily in the liver and small intestine.

Its subcellular location is the mitochondrion. The protein localises to the nucleus. The protein resides in the nucleolus. It localises to the cell membrane. It carries out the reaction hydrogencarbonate + NH4(+) + 2 ATP = carbamoyl phosphate + 2 ADP + phosphate + 2 H(+). With respect to regulation, requires N-acetyl-L-glutamate (NAG) as an allosteric activator. Activated by glycerol in the absence of NAG, whereas in the presence of NAG it is inhibited by increasing concentrations of glycerol. Functionally, involved in the urea cycle of ureotelic animals where the enzyme plays an important role in removing excess ammonia from the cell. The polypeptide is Carbamoyl-phosphate synthase [ammonia], mitochondrial (CPS1) (Homo sapiens (Human)).